A 555-amino-acid polypeptide reads, in one-letter code: Myo-inositol transporter 2 (555 aa).

At 1 to 61 (MSSTLDTITP…NLVRAENEDK (61 aa)) the chain is on the cytoplasmic side. A helical transmembrane segment spans residues 62–82 (VTPYFMFLISVAAIAGFLFGY). Residues 83 to 108 (DTGIVGAALPMVGTSLGHTLSATESE) are Extracellular-facing. A helical transmembrane segment spans residues 109-129 (IITAGTTIGAIFGASILGTMA). At 130–142 (DKLGRKWAMIISD) the chain is on the cytoplasmic side. The chain crosses the membrane as a helical span at residues 143-163 (FAFTAGAIIIAASYSVPQIIV). Topologically, residues 164–165 (GR) are extracellular. A helical membrane pass occupies residues 166–186 (LVLGVGVGGAAVIAPLYIAEL). The Cytoplasmic segment spans residues 187–200 (APTAVRGRCVGANA). Residues 201–221 (FCIPFGQVVASAIGAGFQAGV) form a helical membrane-spanning segment. Topologically, residues 222 to 228 (PYHIGWR) are extracellular. A helical transmembrane segment spans residues 229–249 (VLFGLGVVPSVVQLCLMHFLP). At 250-328 (ESPRVLVLRG…AIISVSGVQA (79 aa)) the chain is on the cytoplasmic side. The helical transmembrane segment at 329–349 (FGQLTGFNTLLYYSGTIFGLL) threads the bilayer. The Extracellular segment spans residues 350 to 355 (GLKNGA). Residues 356 to 376 (AAGLIPSCLNALFVFIGMSIV) form a helical membrane-spanning segment. Topologically, residues 377–385 (DKVGRRKLM) are cytoplasmic. The helical transmembrane segment at 386 to 406 (ITFIPGMMIAFTWTIISFHFL) threads the bilayer. The Extracellular segment spans residues 407–427 (TKPTGGLLLKDYQYSTPLVGS). The helical transmembrane segment at 428–448 (VLGSIVLFVIPFGLTYSHIIW) threads the bilayer. The Cytoplasmic segment spans residues 449-461 (YQSEFLPLEIRAA). A helical membrane pass occupies residues 462-482 (GSAISTTACWLANLVVSVAYL). At 483-487 (TQLEK) the chain is on the extracellular side. The helical transmembrane segment at 488 to 508 (LGATGTYGLYLGFITIGYIFV) threads the bilayer. The Cytoplasmic segment spans residues 509-555 (YFCYPETKGLSIDETAEIFIDGFGIEKAHQMLREKRAFAAELYAGRA).

The protein belongs to the major facilitator superfamily. Sugar transporter (TC 2.A.1.1) family.

It is found in the cell membrane. The catalysed reaction is myo-inositol(out) + H(+)(out) = myo-inositol(in) + H(+)(in). In terms of biological role, transporter for myo-inositol. In Cryptococcus neoformans var. grubii serotype A (strain H99 / ATCC 208821 / CBS 10515 / FGSC 9487) (Filobasidiella neoformans var. grubii), this protein is Myo-inositol transporter 2.